The following is a 386-amino-acid chain: GLABROUS1 enhancer-binding protein-like 1 (386 aa).

Disordered regions lie at residues 1–58 and 197–314; these read MVTP…KKKK and ESGE…DDDD. Positions 216-226 are enriched in basic and acidic residues; that stretch reads EEIRDNDETAR. A coiled-coil region spans residues 221–285; it reads NDETARKAQQ…LKEHEEVANT (65 aa). Over residues 257 to 267 the composition is skewed to polar residues; sequence DNNGTTQIAQQ. Residues 291–300 show a composition bias toward low complexity; that stretch reads NGAAKTTENG. The interval 354 to 375 is non-canonical leucine-zipper; that stretch reads LSDEWKALCVEERRLNIKKLRF.

The protein belongs to the GeBP family. As to quaternary structure, homo- and heterodimers. Interacts with GEBP, GPL2 and GPL3. Interacts with GEBP. In terms of tissue distribution, expressed in the apical meristem and young leaf primordia. Detected in the vascular tissues of cotyledons and leaves, in hydathodes and at the base of flowers and siliques, but not in roots.

Its subcellular location is the nucleus. Functionally, probable transcription factor. May play redundant roles with GEBP and GPL2 in cytokinin responses by regulating the transcript levels of type-A ARR response genes. Involved in stress responses. Plays a repressive role in cell expansion by counteracting the positive role of CPR5 in this process, but does not regulate cell proliferation or endoreduplication. The sequence is that of GLABROUS1 enhancer-binding protein-like 1 from Arabidopsis thaliana (Mouse-ear cress).